Consider the following 275-residue polypeptide: Ribosomal RNA small subunit methyltransferase A (275 aa).

Asparagine 20, leucine 22, glycine 47, glutamate 68, aspartate 90, and asparagine 110 together coordinate S-adenosyl-L-methionine.

This sequence belongs to the class I-like SAM-binding methyltransferase superfamily. rRNA adenine N(6)-methyltransferase family. RsmA subfamily.

It is found in the cytoplasm. It carries out the reaction adenosine(1518)/adenosine(1519) in 16S rRNA + 4 S-adenosyl-L-methionine = N(6)-dimethyladenosine(1518)/N(6)-dimethyladenosine(1519) in 16S rRNA + 4 S-adenosyl-L-homocysteine + 4 H(+). Its function is as follows. Specifically dimethylates two adjacent adenosines (A1518 and A1519) in the loop of a conserved hairpin near the 3'-end of 16S rRNA in the 30S particle. May play a critical role in biogenesis of 30S subunits. The polypeptide is Ribosomal RNA small subunit methyltransferase A (Chlorobaculum tepidum (strain ATCC 49652 / DSM 12025 / NBRC 103806 / TLS) (Chlorobium tepidum)).